The following is a 71-amino-acid chain: Small ribosomal subunit protein bS21 (71 aa).

The protein belongs to the bacterial ribosomal protein bS21 family.

This Hahella chejuensis (strain KCTC 2396) protein is Small ribosomal subunit protein bS21.